A 341-amino-acid chain; its full sequence is UPF0283 membrane protein VV2076 (341 aa).

Transmembrane regions (helical) follow at residues 64 to 84 (LAGG…VDSV), 93 to 113 (WLTL…LGAM), 207 to 227 (ESAA…LVAW), and 255 to 275 (LVLA…AGMD).

This sequence belongs to the UPF0283 family.

The protein localises to the cell inner membrane. This Vibrio vulnificus (strain YJ016) protein is UPF0283 membrane protein VV2076.